The sequence spans 395 residues: Elongation factor Tu (395 aa).

The tr-type G domain maps to 10–204; sequence KTHANIGTIG…AVDSYIPTPE (195 aa). A G1 region spans residues 19–26; it reads GHVDHGKT. 19 to 26 lines the GTP pocket; it reads GHVDHGKT. Thr-26 is a binding site for Mg(2+). Positions 60 to 64 are G2; that stretch reads GITIN. The G3 stretch occupies residues 81–84; sequence DCPG. GTP-binding positions include 81–85 and 136–139; these read DCPGH and NKCD. A G4 region spans residues 136 to 139; the sequence is NKCD. The segment at 174–176 is G5; the sequence is SAL.

Belongs to the TRAFAC class translation factor GTPase superfamily. Classic translation factor GTPase family. EF-Tu/EF-1A subfamily. In terms of assembly, monomer.

The protein localises to the cytoplasm. It carries out the reaction GTP + H2O = GDP + phosphate + H(+). Functionally, GTP hydrolase that promotes the GTP-dependent binding of aminoacyl-tRNA to the A-site of ribosomes during protein biosynthesis. The chain is Elongation factor Tu from Lysinibacillus sphaericus (strain C3-41).